Reading from the N-terminus, the 685-residue chain is Glycine--tRNA ligase beta subunit (685 aa).

The tract at residues 58–77 (GLTAQSPTTREERKGPRTDA) is disordered. The segment covering 66–77 (TREERKGPRTDA) has biased composition (basic and acidic residues).

It belongs to the class-II aminoacyl-tRNA synthetase family. Tetramer of two alpha and two beta subunits.

The protein resides in the cytoplasm. It carries out the reaction tRNA(Gly) + glycine + ATP = glycyl-tRNA(Gly) + AMP + diphosphate. The polypeptide is Glycine--tRNA ligase beta subunit (Paracoccus denitrificans (strain Pd 1222)).